Reading from the N-terminus, the 142-residue chain is Large ribosomal subunit protein uL13 (142 aa).

This sequence belongs to the universal ribosomal protein uL13 family. In terms of assembly, part of the 50S ribosomal subunit.

This protein is one of the early assembly proteins of the 50S ribosomal subunit, although it is not seen to bind rRNA by itself. It is important during the early stages of 50S assembly. The chain is Large ribosomal subunit protein uL13 from Yersinia pseudotuberculosis serotype O:1b (strain IP 31758).